The primary structure comprises 216 residues: Eukaryotic translation initiation factor 3 subunit K (216 aa).

In terms of domain architecture, PCI spans 40–202; it reads YDLDANLAVL…HIKSKNIAEK (163 aa).

It belongs to the eIF-3 subunit K family. In terms of assembly, component of the eukaryotic translation initiation factor 3 (eIF-3) complex.

It localises to the cytoplasm. Component of the eukaryotic translation initiation factor 3 (eIF-3) complex, which is involved in protein synthesis of a specialized repertoire of mRNAs and, together with other initiation factors, stimulates binding of mRNA and methionyl-tRNAi to the 40S ribosome. The eIF-3 complex specifically targets and initiates translation of a subset of mRNAs involved in cell proliferation. This Nematostella vectensis (Starlet sea anemone) protein is Eukaryotic translation initiation factor 3 subunit K.